A 323-amino-acid chain; its full sequence is Serine/threonine-protein phosphatase PP1-gamma catalytic subunit B (323 aa).

The Mn(2+) site is built by aspartate 64, histidine 66, aspartate 92, and asparagine 124. The Proton donor role is filled by histidine 125. 2 residues coordinate Mn(2+): histidine 173 and histidine 248. Residues 301–323 form a disordered region; sequence KKKPNASRPVTPPRGIITKQAKK.

It belongs to the PPP phosphatase family. PP-1 subfamily. PP1 comprises a catalytic subunit, ppp1c1, ppp1cb or ppp1cc, which is folded into its native form by inhibitor 2 and glycogen synthetase kinase 3, and then is complexed to one or several targeting or regulatory subunits. Requires Mn(2+) as cofactor.

The protein localises to the cytoplasm. It localises to the nucleus. The protein resides in the cleavage furrow. Its subcellular location is the nucleolus. It is found in the nucleoplasm. The protein localises to the chromosome. It localises to the centromere. The protein resides in the kinetochore. Its subcellular location is the nucleus speckle. It is found in the midbody. The protein localises to the mitochondrion. The catalysed reaction is O-phospho-L-seryl-[protein] + H2O = L-seryl-[protein] + phosphate. The enzyme catalyses O-phospho-L-threonyl-[protein] + H2O = L-threonyl-[protein] + phosphate. Its function is as follows. Protein phosphatase that associates with over 200 regulatory proteins to form highly specific holoenzymes which dephosphorylate hundreds of biological targets. Protein phosphatase 1 (PP1) is essential for cell division, and participates in the regulation of glycogen metabolism, muscle contractility and protein synthesis. Promotes nuclear envelope reassembly by targeting nuclear membrane vesicles to chromatin at the end of mitosis. Acts by dephosphorylating membrane proteins such as lamin B receptor (lbr) to regulate the binding of membrane proteins to chromatin. This chain is Serine/threonine-protein phosphatase PP1-gamma catalytic subunit B (ppp1cc-b), found in Xenopus laevis (African clawed frog).